The primary structure comprises 158 residues: 2-C-methyl-D-erythritol 2,4-cyclodiphosphate synthase (158 aa).

Aspartate 9 and histidine 11 together coordinate a divalent metal cation. 4-CDP-2-C-methyl-D-erythritol 2-phosphate is bound by residues 9–11 and 35–36; these read DVH and HS. Histidine 43 provides a ligand contact to a divalent metal cation. 4-CDP-2-C-methyl-D-erythritol 2-phosphate is bound by residues 57–59, 62–66, 101–107, 133–136, phenylalanine 140, and arginine 143; these read DIG, FPDTD, AQAPKMA, and TTTE.

It belongs to the IspF family. Homotrimer. A divalent metal cation serves as cofactor.

The enzyme catalyses 4-CDP-2-C-methyl-D-erythritol 2-phosphate = 2-C-methyl-D-erythritol 2,4-cyclic diphosphate + CMP. It participates in isoprenoid biosynthesis; isopentenyl diphosphate biosynthesis via DXP pathway; isopentenyl diphosphate from 1-deoxy-D-xylulose 5-phosphate: step 4/6. Involved in the biosynthesis of isopentenyl diphosphate (IPP) and dimethylallyl diphosphate (DMAPP), two major building blocks of isoprenoid compounds. Catalyzes the conversion of 4-diphosphocytidyl-2-C-methyl-D-erythritol 2-phosphate (CDP-ME2P) to 2-C-methyl-D-erythritol 2,4-cyclodiphosphate (ME-CPP) with a corresponding release of cytidine 5-monophosphate (CMP). In Vibrio vulnificus (strain YJ016), this protein is 2-C-methyl-D-erythritol 2,4-cyclodiphosphate synthase.